Reading from the N-terminus, the 475-residue chain is Mucin-1 (475 aa).

Positions 1–23 (MTPGTQSLFFLLLLLTVLTVVTG) are cleaved as a signal peptide. The disordered stretch occupies residues 23 to 252 (GSGHASSTPG…SPLTSSNHST (230 aa)). Residues 24 to 380 (SGHASSTPGG…QSGAGVPGWG (357 aa)) lie on the Extracellular side of the membrane. Residues 38–48 (SATQRSSMPSS) are compositionally biased toward polar residues. Residues 54–75 (VSMTSSVLSSHSPGSGSSTTQG) are compositionally biased toward low complexity. 5 repeat units span residues 86 to 105 (PASGSAATWGQDVTSVPVTR), 106 to 125 (PAPGSTTSPAQDVTSAPDTR), 126 to 145 (PALGSTAPPVHGVTSAPDTR), 146 to 165 (PTLGSTAPPVHGVTSAPDTR), and 166 to 185 (PTLGSTAPPVHNVTSASGSA). The interval 86 to 185 (PASGSAATWG…HNVTSASGSA (100 aa)) is 5 X 20 AA approximate tandem repeats. Residues 90-102 (SAATWGQDVTSVP) show a composition bias toward polar residues. O-linked (GalNAc...) threonine glycosylation is found at Thr-93 and Thr-99. Ser-100 carries an O-linked (GalNAc...) serine glycan. Thr-104 carries O-linked (GalNAc...) threonine glycosylation. Polar residues predominate over residues 109–122 (GSTTSPAQDVTSAP). N-linked (GlcNAc...) asparagine glycosylation is present at Asn-177. The segment covering 180-190 (SASGSASGSAS) has biased composition (low complexity). Composition is skewed to polar residues over residues 191 to 213 (TLVHNGTSARATTTPASKSTPFS) and 233 to 252 (DASSTHHSTVSPLTSSNHST). Residues Asn-195, Asn-249, Asn-275, and Asn-353 are each glycosylated (N-linked (GlcNAc...) asparagine). The SEA domain maps to 259–368 (GVSFFFLSFH…VSVSDVPFPF (110 aa)). Residues 381 to 401 (IALLVLVCVLVALAIVYLIAL) traverse the membrane as a helical segment. Residues 402–475 (AVCQCRRKNY…PAVAATSANL (74 aa)) lie on the Cytoplasmic side of the membrane. Residues Cys-404 and Cys-406 are each lipidated (S-palmitoyl cysteine). Positions 412–448 (GQLDIFPARDAYHPMSEYPTYHTHGRYVPPSSTNRSP) are interaction with P53. Tyr-423 carries the phosphotyrosine; by PDGFR modification. The Interaction with GRB2 signature appears at 423–426 (YHPM). Position 432 is a phosphotyrosine (Tyr-432). The interval 435-460 (HGRYVPPSSTNRSPYEKVSEGNGGSS) is disordered. Position 438 is a phosphotyrosine; by PDGFR (Tyr-438). The segment at 443–450 (STNRSPYE) is required for interaction with GSK3B. Thr-444 is modified (phosphothreonine; by PKC/PRKCD). Ser-447 is subject to Phosphoserine; by GSK3-beta. Tyr-449 carries the post-translational modification Phosphotyrosine; by CSK, EGFR and SRC. Positions 449 to 452 (YEKV) match the Interaction with SRC and ESR1 motif. The tract at residues 453-461 (SEGNGGSSL) is required for interaction with beta- and gamma-catenins. Tyr-463 carries the post-translational modification Phosphotyrosine. The Required for interaction with AP1S2 motif lies at 463 to 466 (YTNP).

As to quaternary structure, the alpha subunit forms a tight, non-covalent heterodimeric complex with the proteolytically-released beta-subunit. Binds directly the SH2 domain of GRB2, and forms a MUC1/GRB2/SOS1 complex involved in RAS signaling. The cytoplasmic tail (MUC1CT) interacts with several proteins such as SRC, CTNNB1 and ERBs. Interaction with the SH2 domain of CSK decreases interaction with GSK3B. Interacts with CTNNB1/beta-catenin and JUP/gamma-catenin and promotes cell adhesion. Interaction with JUP/gamma-catenin is induced by heregulin. Binds PRKCD, ERBB2, ERBB3 and ERBB4. Heregulin (HRG) stimulates the interaction with ERBB2 and, to a much lesser extent, the interaction with ERBB3 and ERBB4. Interacts with P53 in response to DNA damage. Interacts with KLF4. Interacts with estrogen receptor alpha/ESR1, through its DNA-binding domain, and stimulates its transcription activity. Binds ADAM17. Post-translationally, probably both N- and O-glycosylated (in repeat region). In terms of processing, proteolytic cleavage in the SEA domain occurs in the endoplasmic reticulum by an autoproteolytic mechanism and requires the full-length SEA domain as well as requiring a Ser, Thr or Cys residue at the P + 1 site. Ectodomain shedding is mediated by ADAM17 in uterine epithelial cells. Dual palmitoylation on cysteine residues in the CQC motif is required for recycling from endosomes back to the plasma membrane. Post-translationally, phosphorylated on tyrosines and serine residues in the C-terminal. Phosphorylation on tyrosines in the C-terminal increases the nuclear location of MUC1 and beta-catenin. Phosphorylation by PKC delta induces binding of MUC1 to beta-catenin/CTNNB1 and thus decreases the formation of the beta-catenin/E-cadherin complex. Src-mediated phosphorylation inhibits interaction with GSK3B. Csk- or Src- or EGFR-mediated phosphorylation on Tyr-449 increases binding to beta-catenin/CTNNB1. GSK3B-mediated phosphorylation on Ser-447 decreases this interaction but restores the formation of the beta-cadherin/E-cadherin complex. On T-cell receptor activation, phosphorylated by LCK. PDGFR-mediated phosphorylation increases nuclear colocalization of MUC1CT and CTNNB1.

It is found in the apical cell membrane. It localises to the cell membrane. The protein localises to the cytoplasm. Its subcellular location is the nucleus. Functionally, the alpha subunit has cell adhesive properties. Can act both as an adhesion and an anti-adhesion protein. May provide a protective layer on epithelial cells against bacterial and enzyme attack. The beta subunit contains a C-terminal domain which is involved in cell signaling, through phosphorylations and protein-protein interactions. Modulates signaling in ERK, Src and NF-kappaB pathways. In activated T-cells, influences directly or indirectly the Ras/MAPK pathway. Promotes tumor progression. Regulates P53-mediated transcription and determines cell fate in the genotoxic stress response. Binds, together with KLF4, the PE21 promoter element of P53 and represses P53 activity. The sequence is that of Mucin-1 (MUC1) from Hylobates lar (Lar gibbon).